Here is a 197-residue protein sequence, read N- to C-terminus: Molybdenum cofactor guanylyltransferase (197 aa).

GTP-binding positions include 10–12, K23, N51, D69, and D99; that span reads LAG. Mg(2+) is bound at residue D99.

This sequence belongs to the MobA family. In terms of assembly, monomer. Mg(2+) serves as cofactor.

Its subcellular location is the cytoplasm. The catalysed reaction is Mo-molybdopterin + GTP + H(+) = Mo-molybdopterin guanine dinucleotide + diphosphate. Its function is as follows. Transfers a GMP moiety from GTP to Mo-molybdopterin (Mo-MPT) cofactor (Moco or molybdenum cofactor) to form Mo-molybdopterin guanine dinucleotide (Mo-MGD) cofactor. The polypeptide is Molybdenum cofactor guanylyltransferase (Shewanella sp. (strain ANA-3)).